The sequence spans 269 residues: MSVVSMKSLLEAGVHFGHQTRRWNPKMSKFIFTERNGIYIIDLQKTVKQIDDAYNYVRDIVADGGEVLFVGTKKQAQEAIETEAKRCGQHFVSQRWLGGMLTNYKTIKTRINRLHKLYEMEEDGTFDLLPKKEVSQLEREREKLEKNLGGIRKMNKMPSVLFVVDPKKEYIAVHEAKILGIPVVGIVDTNCDPDELDIAIPGNDDAIRAVKLLTSTIADAVIEANQGREDSEDVYSETENDTEETDEELVSEEDLKEFVENSEEESDEE.

The tract at residues alanine 224–glutamate 269 is disordered. Residues aspartate 230–glutamate 269 are compositionally biased toward acidic residues.

This sequence belongs to the universal ribosomal protein uS2 family.

The protein is Small ribosomal subunit protein uS2 of Finegoldia magna (strain ATCC 29328 / DSM 20472 / WAL 2508) (Peptostreptococcus magnus).